A 332-amino-acid polypeptide reads, in one-letter code: MTVTANQVLRPRGPQIERLTDTRAKVVIEPLERGYGHTLGNALRRVLLSSIPGFAITEVEIDGVLHEYTTVEGLQEDVLEVLLNLKDVAIRMHSGDSATLSLSKQGPGVVTAADIKVDHNVEILNGDHVICHLTKDTAVNMRLKIERGFGYQPAAARRRPDEETRAIGRLVLDASFSPVRRVAYAVEAARVEQRTDLDKLVIDIETNGTIDAEEAVRTAADILSDQLSVFGDFTHRDRGAAKPANNGVDPVLLRPIDDLELTVRSANCLKAESIYYIGDLIQKTEVELLKTPNLGKKSLTEIKEVLAQRGLSLGMKLENWPPAGVASHGMLG.

An alpha N-terminal domain (alpha-NTD) region spans residues 1–234 (MTVTANQVLR…DQLSVFGDFT (234 aa)). Positions 248-332 (VDPVLLRPID…AGVASHGMLG (85 aa)) are alpha C-terminal domain (alpha-CTD).

It belongs to the RNA polymerase alpha chain family. Homodimer. The RNAP catalytic core consists of 2 alpha, 1 beta, 1 beta' and 1 omega subunit. When a sigma factor is associated with the core the holoenzyme is formed, which can initiate transcription.

The catalysed reaction is RNA(n) + a ribonucleoside 5'-triphosphate = RNA(n+1) + diphosphate. In terms of biological role, DNA-dependent RNA polymerase catalyzes the transcription of DNA into RNA using the four ribonucleoside triphosphates as substrates. This Stenotrophomonas maltophilia (strain R551-3) protein is DNA-directed RNA polymerase subunit alpha.